A 91-amino-acid polypeptide reads, in one-letter code: Small ribosomal subunit protein bS20 (91 aa).

Residues 1 to 21 (MPLHKSAEKRLRQSARRNERN) show a composition bias toward basic and acidic residues. Disordered stretches follow at residues 1 to 25 (MPLH…RARK) and 70 to 91 (PNKA…MKAE). Basic residues predominate over residues 70–79 (PNKASRKKSQ).

The protein belongs to the bacterial ribosomal protein bS20 family.

Its function is as follows. Binds directly to 16S ribosomal RNA. This Chlorobium phaeobacteroides (strain BS1) protein is Small ribosomal subunit protein bS20.